The following is a 249-amino-acid chain: tRNA pseudouridine synthase A (249 aa).

The Nucleophile role is filled by Asp53. Tyr111 is a substrate binding site.

The protein belongs to the tRNA pseudouridine synthase TruA family. As to quaternary structure, homodimer.

It catalyses the reaction uridine(38/39/40) in tRNA = pseudouridine(38/39/40) in tRNA. Formation of pseudouridine at positions 38, 39 and 40 in the anticodon stem and loop of transfer RNAs. In Streptococcus pneumoniae (strain 70585), this protein is tRNA pseudouridine synthase A.